We begin with the raw amino-acid sequence, 61 residues long: Small ribosomal subunit protein uS14 (61 aa).

4 residues coordinate Zn(2+): Cys24, Cys27, Cys40, and Cys43.

This sequence belongs to the universal ribosomal protein uS14 family. Zinc-binding uS14 subfamily. Part of the 30S ribosomal subunit. Contacts proteins S3 and S10. It depends on Zn(2+) as a cofactor.

In terms of biological role, binds 16S rRNA, required for the assembly of 30S particles and may also be responsible for determining the conformation of the 16S rRNA at the A site. The chain is Small ribosomal subunit protein uS14 from Anoxybacillus flavithermus (strain DSM 21510 / WK1).